A 647-amino-acid polypeptide reads, in one-letter code: Threonine--tRNA ligase (647 aa).

The TGS domain maps to 1 to 61 (MIKITFPDGA…EEDGSIEIVT (61 aa)). A catalytic region spans residues 240–538 (DHRKLGKELD…LIETYKGAFP (299 aa)). Positions 334, 385, and 515 each coordinate Zn(2+).

The protein belongs to the class-II aminoacyl-tRNA synthetase family. Homodimer. The cofactor is Zn(2+).

It localises to the cytoplasm. It carries out the reaction tRNA(Thr) + L-threonine + ATP = L-threonyl-tRNA(Thr) + AMP + diphosphate + H(+). In terms of biological role, catalyzes the attachment of threonine to tRNA(Thr) in a two-step reaction: L-threonine is first activated by ATP to form Thr-AMP and then transferred to the acceptor end of tRNA(Thr). Also edits incorrectly charged L-seryl-tRNA(Thr). The polypeptide is Threonine--tRNA ligase (Streptococcus pyogenes serotype M3 (strain ATCC BAA-595 / MGAS315)).